A 430-amino-acid polypeptide reads, in one-letter code: MEF2-activating motif and SAP domain-containing transcriptional regulator (430 aa).

An MEF2-binding motif is present at residues isoleucine 12–arginine 28. Disordered stretches follow at residues cysteine 84–histidine 172, lysine 204–proline 239, valine 280–serine 301, and glutamate 330–aspartate 416. The span at leucine 87–proline 103 shows a compositional bias: basic and acidic residues. Residues glutamine 147–leucine 170 are compositionally biased toward pro residues. The SAP domain maps to leucine 181–alanine 215. Residues leucine 207–serine 228 show a composition bias toward basic and acidic residues. The transcription activation stretch occupies residues arginine 224 to tryptophan 430. Low complexity-rich tracts occupy residues serine 363–proline 373 and alanine 393–glycine 403.

As to quaternary structure, interacts with MEF2C.

It localises to the nucleus. In terms of biological role, transcriptional coactivator. Stimulates the transcriptional activity of MEF2C. Stimulates MYOD1 activity in part via MEF2, resulting in an enhancement of skeletal muscle differentiation. This chain is MEF2-activating motif and SAP domain-containing transcriptional regulator (MAMSTR), found in Bos taurus (Bovine).